Consider the following 251-residue polypeptide: Demethylmenaquinone methyltransferase (251 aa).

S-adenosyl-L-methionine contacts are provided by residues Thr-66, Asp-87, and 115-116 (NA).

The protein belongs to the class I-like SAM-binding methyltransferase superfamily. MenG/UbiE family.

The catalysed reaction is a 2-demethylmenaquinol + S-adenosyl-L-methionine = a menaquinol + S-adenosyl-L-homocysteine + H(+). It participates in quinol/quinone metabolism; menaquinone biosynthesis; menaquinol from 1,4-dihydroxy-2-naphthoate: step 2/2. Methyltransferase required for the conversion of demethylmenaquinol (DMKH2) to menaquinol (MKH2). In Symbiobacterium thermophilum (strain DSM 24528 / JCM 14929 / IAM 14863 / T), this protein is Demethylmenaquinone methyltransferase.